Reading from the N-terminus, the 537-residue chain is Pentatricopeptide repeat-containing protein At4g32450, mitochondrial (537 aa).

Residues 1 to 110 (MIYTLTRGSL…EHSEIINQRN (110 aa)) constitute a mitochondrion transit peptide. The segment covering 113-140 (WQSSDGCSSYGTTGNGVPQENNTGGNHF) has biased composition (polar residues). The interval 113–148 (WQSSDGCSSYGTTGNGVPQENNTGGNHFQQDHSGHS) is disordered. PPR repeat units lie at residues 145-179 (SGHS…GYVV), 180-210 (DLPR…ITSS), 215-249 (DISA…NLET), 250-280 (WCGV…GNKP), 281-316 (DGEM…GIIP), and 317-347 (CMEH…MEPN). Residues 412–442 (YGIRYMAAGDISRPENRELYMALKSLKEHMI) are type E(+) motif. The segment at 443–537 (EIGYVPLSKL…DGVCSCREYW (95 aa)) is type DYW motif.

It belongs to the PPR family. PCMP-H subfamily.

It localises to the mitochondrion. The protein is Pentatricopeptide repeat-containing protein At4g32450, mitochondrial (PCMP-H63) of Arabidopsis thaliana (Mouse-ear cress).